The chain runs to 894 residues: Protein translocase subunit SecA (894 aa).

Residues Gln-87, 105-109 (GEGKT), and Asp-512 contribute to the ATP site. The tract at residues 836–870 (EVEQAERERQAHAEQESSHYHAEGEGQDFSDLHIG) is disordered. The Zn(2+) site is built by Cys-875, Cys-877, Cys-886, and His-887.

It belongs to the SecA family. In terms of assembly, monomer and homodimer. Part of the essential Sec protein translocation apparatus which comprises SecA, SecYEG and auxiliary proteins SecDF-YajC and YidC. Requires Zn(2+) as cofactor.

It localises to the cell inner membrane. Its subcellular location is the cytoplasm. It carries out the reaction ATP + H2O + cellular proteinSide 1 = ADP + phosphate + cellular proteinSide 2.. Part of the Sec protein translocase complex. Interacts with the SecYEG preprotein conducting channel. Has a central role in coupling the hydrolysis of ATP to the transfer of proteins into and across the cell membrane, serving both as a receptor for the preprotein-SecB complex and as an ATP-driven molecular motor driving the stepwise translocation of polypeptide chains across the membrane. The chain is Protein translocase subunit SecA from Glaesserella parasuis serovar 5 (strain SH0165) (Haemophilus parasuis).